The following is a 143-amino-acid chain: Large ribosomal subunit protein uL11 (143 aa).

The protein belongs to the universal ribosomal protein uL11 family. As to quaternary structure, part of the ribosomal stalk of the 50S ribosomal subunit. Interacts with L10 and the large rRNA to form the base of the stalk. L10 forms an elongated spine to which L12 dimers bind in a sequential fashion forming a multimeric L10(L12)X complex. In terms of processing, one or more lysine residues are methylated.

Its function is as follows. Forms part of the ribosomal stalk which helps the ribosome interact with GTP-bound translation factors. This Stutzerimonas stutzeri (strain A1501) (Pseudomonas stutzeri) protein is Large ribosomal subunit protein uL11.